The primary structure comprises 381 residues: MTLVFGSSCRLAVTLIFAFVSVFVFCEYVIYYLVILRCSWPLLEIEDSHSPLRALFLSDTHLLGAIRGHWLDKLRREWQMERAFQTSMWLLNPEVVFILGDVFDEGKWSTSQDWEDDVRRFKRIFRHPVDTKLVVLVGNHDIGFHHEMTKQKLERFEQVFNVTSARILTIKGVNFLLVNSVALHGDHCPICQHVEEELQKLSHALNCSIQGAQHNGQCKNAARFAPAAPVLLQHYPLYRVSDAMCTGVDTAPLDEQYLLFQERYDVISKNASKKLLWWFKPRLILSGHTHNGCEVLHEKLYPEISVPSFSWRNRNNPSFVLGTFSQSEFQLSKCFLPEERTVLVVYCSSCLIIALITLIHLKMFRNSLQFTNNLIGKHKTL.

A helical transmembrane segment spans residues leucine 15–isoleucine 35. A divalent metal cation-binding residues include aspartate 59, aspartate 101, asparagine 139, histidine 234, histidine 288, and histidine 290. The chain crosses the membrane as a helical span at residues threonine 341–leucine 361. The Di-lysine motif signature appears at lysine 377–leucine 381.

Belongs to the metallophosphoesterase superfamily. MPPE1 family. Mn(2+) serves as cofactor.

Its subcellular location is the endoplasmic reticulum-Golgi intermediate compartment membrane. In terms of biological role, metallophosphoesterase that catalyzes the removal of a side-chain ethanolamine-phosphate (EtNP) from the second mannose of the GPI-anchor protein intermediate. Participates in the glycan remodeling steps of GPI-anchor maturation to allow an efficient transport of GPI-anchor proteins from the endoplasmic reticulum to the Golgi. This chain is Metallophosphoesterase 1, found in Danio rerio (Zebrafish).